Here is a 118-residue protein sequence, read N- to C-terminus: Large ribosomal subunit protein bL20 (118 aa).

It belongs to the bacterial ribosomal protein bL20 family.

Its function is as follows. Binds directly to 23S ribosomal RNA and is necessary for the in vitro assembly process of the 50S ribosomal subunit. It is not involved in the protein synthesizing functions of that subunit. The sequence is that of Large ribosomal subunit protein bL20 from Caldicellulosiruptor saccharolyticus (strain ATCC 43494 / DSM 8903 / Tp8T 6331).